The sequence spans 352 residues: C-glycoside deglycosidase alpha subunit (352 aa).

Residue Glu147 coordinates Mn(2+). His149 (proton acceptor) is an active-site residue. 3 residues coordinate Mn(2+): Asp179, His269, and Glu305.

Belongs to the C-glycoside deglycosidase alpha subunit family. In terms of assembly, heterodimer composed of an alpha subunit (CarB2) and a beta subunit (CarC2). It depends on a divalent metal cation as a cofactor.

It catalyses the reaction 3''-dehydroorientin = 1,5-anhydro-D-erythro-hex-1-en-3-ulose + luteolin. Activity is strongly reduced in the presence of chelating agents. Functionally, carbon-carbon bond-cleaving enzyme which participates in the metabolism of C-glycosides. Acts on the C8-glycosylated compound 3''-dehydroorientin (3''-oxo-orientin). The protein is C-glycoside deglycosidase alpha subunit of Arthrobacter globiformis (strain ATCC 8010 / DSM 20124 / JCM 1332 / NBRC 12137 / NCIMB 8907 / NRRL B-2979 / 168).